We begin with the raw amino-acid sequence, 310 residues long: Malate dehydrogenase (310 aa).

NAD(+)-binding positions include 7–12 (GAGNVG) and Asp-32. Residues Arg-81 and Arg-87 each coordinate substrate. NAD(+) is bound by residues Asn-94 and 117–119 (VSN). Substrate contacts are provided by Asn-119 and Arg-150. Catalysis depends on His-174, which acts as the Proton acceptor.

This sequence belongs to the LDH/MDH superfamily. MDH type 3 family.

The enzyme catalyses (S)-malate + NAD(+) = oxaloacetate + NADH + H(+). Catalyzes the reversible oxidation of malate to oxaloacetate. The protein is Malate dehydrogenase of Chloroherpeton thalassium (strain ATCC 35110 / GB-78).